Reading from the N-terminus, the 90-residue chain is Spore coat protein F-like protein YgzC (90 aa).

The protein belongs to the CotF family.

Its subcellular location is the spore coat. This Bacillus subtilis (strain 168) protein is Spore coat protein F-like protein YgzC (ygzC).